Reading from the N-terminus, the 132-residue chain is Ribosome-binding factor A (132 aa).

Belongs to the RbfA family. Monomer. Binds 30S ribosomal subunits, but not 50S ribosomal subunits or 70S ribosomes.

It is found in the cytoplasm. Functionally, one of several proteins that assist in the late maturation steps of the functional core of the 30S ribosomal subunit. Associates with free 30S ribosomal subunits (but not with 30S subunits that are part of 70S ribosomes or polysomes). Required for efficient processing of 16S rRNA. May interact with the 5'-terminal helix region of 16S rRNA. This chain is Ribosome-binding factor A, found in Bordetella avium (strain 197N).